Reading from the N-terminus, the 388-residue chain is S-adenosylmethionine synthase (388 aa).

ATP is bound at residue His16. Asp18 serves as a coordination point for Mg(2+). Position 44 (Glu44) interacts with K(+). L-methionine is bound by residues Glu57 and Gln100. The interval 100–110 (QSPEIAQGVDR) is flexible loop. Residues 165-167 (DAK), 231-232 (KF), Asp240, 246-247 (RK), Ala263, and Lys267 each bind ATP. Residue Asp240 participates in L-methionine binding. Lys271 serves as a coordination point for L-methionine.

It belongs to the AdoMet synthase family. In terms of assembly, homotetramer; dimer of dimers. Requires Mg(2+) as cofactor. K(+) is required as a cofactor.

The protein localises to the cytoplasm. It catalyses the reaction L-methionine + ATP + H2O = S-adenosyl-L-methionine + phosphate + diphosphate. It functions in the pathway amino-acid biosynthesis; S-adenosyl-L-methionine biosynthesis; S-adenosyl-L-methionine from L-methionine: step 1/1. Its function is as follows. Catalyzes the formation of S-adenosylmethionine (AdoMet) from methionine and ATP. The overall synthetic reaction is composed of two sequential steps, AdoMet formation and the subsequent tripolyphosphate hydrolysis which occurs prior to release of AdoMet from the enzyme. The chain is S-adenosylmethionine synthase from Psychrobacter sp. (strain PRwf-1).